We begin with the raw amino-acid sequence, 156 residues long: Small ribosomal subunit protein uS7 (156 aa).

This sequence belongs to the universal ribosomal protein uS7 family. In terms of assembly, part of the 30S ribosomal subunit. Contacts proteins S9 and S11.

Its function is as follows. One of the primary rRNA binding proteins, it binds directly to 16S rRNA where it nucleates assembly of the head domain of the 30S subunit. Is located at the subunit interface close to the decoding center, probably blocks exit of the E-site tRNA. The chain is Small ribosomal subunit protein uS7 from Latilactobacillus sakei subsp. sakei (strain 23K) (Lactobacillus sakei subsp. sakei).